The following is a 327-amino-acid chain: Ribosomal RNA small subunit methyltransferase H (327 aa).

Residues 37–39, Asp-55, Phe-82, Asp-99, and Gln-106 each bind S-adenosyl-L-methionine; that span reads GGY. Residues 303 to 327 form a disordered region; sequence IATRTDAPAQPVAPETLGLPQLEGF.

This sequence belongs to the methyltransferase superfamily. RsmH family.

Its subcellular location is the cytoplasm. It catalyses the reaction cytidine(1402) in 16S rRNA + S-adenosyl-L-methionine = N(4)-methylcytidine(1402) in 16S rRNA + S-adenosyl-L-homocysteine + H(+). Functionally, specifically methylates the N4 position of cytidine in position 1402 (C1402) of 16S rRNA. This chain is Ribosomal RNA small subunit methyltransferase H, found in Jannaschia sp. (strain CCS1).